The sequence spans 172 residues: MKKKQVMLALTAAAGLGLTALHSAPAAKAAPLHDISVSMPSSDTYIIKAGKLNVRTEPNHEGDILGTVSSEQKVKVDRFVNADWAQIHFKGKKAYISTHFLMKTASQAKTTKQTAFYTPTPENGKAKQLSSGTEVTILGWGFSENGGFDFTWAFVDYGGVKGYIHTKDLQMR.

The N-terminal stretch at M1–A29 is a signal peptide. 2 SH3b domains span residues S42–A105 and K112–R172.

This is an uncharacterized protein from Bacillus subtilis (strain 168).